Reading from the N-terminus, the 306-residue chain is D-alanine--D-alanine ligase (306 aa).

Positions 101 to 303 (KQVWQAVGLP…FSQLVVKILE (203 aa)) constitute an ATP-grasp domain. An ATP-binding site is contributed by 134-189 (FTHLGLPLIVKPSREGSSVGMSKVNTLSELPAALEEAFRHDDDILVEKWLSGPEYT). Mg(2+) contacts are provided by aspartate 257, glutamate 270, and asparagine 272.

This sequence belongs to the D-alanine--D-alanine ligase family. Mg(2+) serves as cofactor. Requires Mn(2+) as cofactor.

The protein resides in the cytoplasm. The enzyme catalyses 2 D-alanine + ATP = D-alanyl-D-alanine + ADP + phosphate + H(+). The protein operates within cell wall biogenesis; peptidoglycan biosynthesis. Functionally, cell wall formation. The sequence is that of D-alanine--D-alanine ligase from Pectobacterium carotovorum subsp. carotovorum (strain PC1).